Consider the following 437-residue polypeptide: Elongator complex protein 4 (437 aa).

The interval 179 to 247 (FSKSSSPTTP…TKTGSQDSPL (69 aa)) is disordered. Polar residues predominate over residues 181-192 (KSSSPTTPSLEQ). Ser183 is subject to Phosphoserine. Residues 220 to 237 (SANNNNNNNNNSSSVTSS) are compositionally biased toward low complexity. At Ser242 the chain carries Phosphoserine.

It belongs to the ELP4 family. As to quaternary structure, component of the elongator complex composed of Elp1, Elp2, Elp3, Elp4, Elp5 and Elp6. The elongator complex associates with and stabilizes microtubules; efficient interaction requires the full complex.

The protein resides in the cytoplasm. It is found in the nucleus. Its subcellular location is the cytoskeleton. The protein localises to the spindle. It functions in the pathway tRNA modification; 5-methoxycarbonylmethyl-2-thiouridine-tRNA biosynthesis. Its function is as follows. Component of the elongator complex, which is required for multiple tRNA modifications, including mcm5U (5-methoxycarbonylmethyl uridine), mcm5s2U (5-methoxycarbonylmethyl-2-thiouridine), and ncm5U (5-carbamoylmethyl uridine). The elongator complex catalyzes the formation of carboxymethyluridine in the wobble base at position 34 in tRNAs. Binding by the elongator complex stabilizes microtubules and promotes their growth. This induces central spindle asymmetry, promoting polarized signaling endosome trafficking during asymmetric cell division and cell fate assignation of sensory organ precursor cells. This is Elongator complex protein 4 from Drosophila melanogaster (Fruit fly).